The following is a 201-amino-acid chain: Small ribosomal subunit protein uS4c (201 aa).

One can recognise an S4 RNA-binding domain in the interval 90–153 (MRLDNVIFRL…SSQNLVKRYL (64 aa)).

This sequence belongs to the universal ribosomal protein uS4 family. Part of the 30S ribosomal subunit. Contacts protein S5. The interaction surface between S4 and S5 is involved in control of translational fidelity.

It is found in the plastid. The protein resides in the chloroplast. Its function is as follows. One of the primary rRNA binding proteins, it binds directly to 16S rRNA where it nucleates assembly of the body of the 30S subunit. In terms of biological role, with S5 and S12 plays an important role in translational accuracy. The protein is Small ribosomal subunit protein uS4c (rps4) of Gracilaria tenuistipitata var. liui (Red alga).